We begin with the raw amino-acid sequence, 306 residues long: Acetyl-coenzyme A carboxylase carboxyl transferase subunit beta (306 aa).

The CoA carboxyltransferase N-terminal domain occupies 25 to 294; that stretch reads LWIKCPETGE…TVVGANDDKT (270 aa).

It belongs to the AccD/PCCB family. Acetyl-CoA carboxylase is a heterohexamer composed of biotin carboxyl carrier protein (AccB), biotin carboxylase (AccC) and two subunits each of ACCase subunit alpha (AccA) and ACCase subunit beta (AccD).

The protein resides in the cytoplasm. The catalysed reaction is N(6)-carboxybiotinyl-L-lysyl-[protein] + acetyl-CoA = N(6)-biotinyl-L-lysyl-[protein] + malonyl-CoA. It participates in lipid metabolism; malonyl-CoA biosynthesis; malonyl-CoA from acetyl-CoA: step 1/1. Functionally, component of the acetyl coenzyme A carboxylase (ACC) complex. Biotin carboxylase (BC) catalyzes the carboxylation of biotin on its carrier protein (BCCP) and then the CO(2) group is transferred by the transcarboxylase to acetyl-CoA to form malonyl-CoA. This Allorhizobium ampelinum (strain ATCC BAA-846 / DSM 112012 / S4) (Agrobacterium vitis (strain S4)) protein is Acetyl-coenzyme A carboxylase carboxyl transferase subunit beta.